Consider the following 147-residue polypeptide: Small ribosomal subunit protein uS12 (147 aa).

It belongs to the universal ribosomal protein uS12 family. In terms of assembly, part of the 30S ribosomal subunit.

With S4 and S5 plays an important role in translational accuracy. Located at the interface of the 30S and 50S subunits. This chain is Small ribosomal subunit protein uS12, found in Methanococcus aeolicus (strain ATCC BAA-1280 / DSM 17508 / OCM 812 / Nankai-3).